The following is a 434-amino-acid chain: MQLLAIGINHTTAPVSLRERVAFPLEQIKPALGALRSHLSGRSGTEAAILSTCNRTEIYCATDVLTPGTDGFEHTLRWLSQHHNVPAGELAPHLYALPQSEAVRHAFRVASGLDSMVLGETQILGQLKDAVRTAGEAGSLGTYLNQLFQRTFAVAKEVRGQTEIGAHSVSMAAAAVRLAQRIFESVSTQRVLFIGAGEMIELCATHFAAQQPRQIVVANRTVERGEKLAEQLSGQGLTANAIRLTDLGERLHEFDIVVSCTASSLPIIGLGAVERAVKRRKHRPIMMVDLAVPRDVEPEVARLDDVFLYTVDDLGAIVREGNAMRQAAVAQAEAIIESRVQNFMHWLETRSVVPVIRELQTSGEAIRQAELERARRMLARGDDPEAVLEALSGALTRKFLHGPTHALNHTQGEDREALLRLVPGLFRHSSHSER.

Substrate contacts are provided by residues threonine 52–arginine 55, serine 115, glutamate 120–glutamine 122, and glutamine 126. The active-site Nucleophile is the cysteine 53. Position 195-200 (glycine 195–isoleucine 200) interacts with NADP(+).

The protein belongs to the glutamyl-tRNA reductase family. In terms of assembly, homodimer.

The catalysed reaction is (S)-4-amino-5-oxopentanoate + tRNA(Glu) + NADP(+) = L-glutamyl-tRNA(Glu) + NADPH + H(+). It functions in the pathway porphyrin-containing compound metabolism; protoporphyrin-IX biosynthesis; 5-aminolevulinate from L-glutamyl-tRNA(Glu): step 1/2. In terms of biological role, catalyzes the NADPH-dependent reduction of glutamyl-tRNA(Glu) to glutamate 1-semialdehyde (GSA). In Cupriavidus necator (strain ATCC 17699 / DSM 428 / KCTC 22496 / NCIMB 10442 / H16 / Stanier 337) (Ralstonia eutropha), this protein is Glutamyl-tRNA reductase.